The chain runs to 610 residues: Pyruvate decarboxylase 1 (610 aa).

D72 and H159 together coordinate substrate. The interval 437–519 is thiamine pyrophosphate binding; it reads DSWFNCQKLR…FLINNGGYTI (83 aa). 3 residues coordinate Mg(2+): D487, N514, and G516. E520 provides a ligand contact to substrate.

It belongs to the TPP enzyme family. Homotetramer. A metal cation is required as a cofactor. The cofactor is thiamine diphosphate.

It catalyses the reaction a 2-oxocarboxylate + H(+) = an aldehyde + CO2. The sequence is that of Pyruvate decarboxylase 1 (PDC1) from Zea mays (Maize).